Reading from the N-terminus, the 535-residue chain is Alpha-1,3-mannosyl-glycoprotein 4-beta-N-acetylglucosaminyltransferase A (535 aa).

At 1-6 (MRLRNG) the chain is on the cytoplasmic side. Residues 7–27 (TVATALVFVTSFLTLSWYTTW) traverse the membrane as a helical; Signal-anchor for type II membrane protein segment. The stretch at 28–63 (QNGKEKLIAYQREFLALKERLRVAEHRISQRSSELN) forms a coiled coil. At 28 to 535 (QNGKEKLIAY…NEIHIKKVTS (508 aa)) the chain is on the lumenal side. N77 and N458 each carry an N-linked (GlcNAc...) asparagine glycan. Phosphoserine is present on S474.

The protein belongs to the glycosyltransferase 54 family. Requires a divalent metal cation as cofactor. N-glycosylated.

The protein resides in the golgi apparatus membrane. It is found in the secreted. The catalysed reaction is N(4)-{beta-D-GlcNAc-(1-&gt;2)-alpha-D-Man-(1-&gt;3)-[beta-D-GlcNAc-(1-&gt;2)-alpha-D-Man-(1-&gt;6)]-beta-D-Man-(1-&gt;4)-beta-D-GlcNAc-(1-&gt;4)-beta-D-GlcNAc}-L-asparaginyl-[protein] + UDP-N-acetyl-alpha-D-glucosamine = N(4)-{beta-D-GlcNAc-(1-&gt;2)-[beta-D-GlcNAc-(1-&gt;4)]-alpha-D-Man-(1-&gt;3)-[beta-D-GlcNAc-(1-&gt;2)-alpha-D-Man-(1-&gt;6)]-beta-D-Man-(1-&gt;4)-beta-D-GlcNAc-(1-&gt;4)-beta-D-GlcNAc}-L-asparaginyl-[protein] + UDP + H(+). It carries out the reaction an N(4)-{beta-D-GlcNAc-(1-&gt;2)-alpha-D-Man-(1-&gt;3)-[alpha-D-Man-(1-&gt;6)]-beta-D-Man-(1-&gt;4)-beta-D-GlcNAc-(1-&gt;4)-beta-D-GlcNAc}-L-asparaginyl-[protein] + UDP-N-acetyl-alpha-D-glucosamine = an N(4)-{beta-D-GlcNAc-(1-&gt;2)-[beta-D-GlcNAc-(1-&gt;4)]-alpha-D-Man-(1-&gt;3)-[alpha-D-Man-(1-&gt;6)]-beta-D-Man-(1-&gt;4)-beta-D-GlcNAc-(1-&gt;4)-beta-D-GlcNAc}-L-asparaginyl-[protein] + UDP + H(+). It catalyses the reaction an N(4)-{beta-D-GlcNAc-(1-&gt;2)-alpha-D-Man-(1-&gt;3)-[beta-D-GlcNAc-(1-&gt;2)-[beta-D-GlcNAc-(1-&gt;6)]-alpha-D-Man-(1-&gt;6)]-beta-D-Man-(1-&gt;4)-beta-D-GlcNAc-(1-&gt;4)-beta-D-GlcNAc}-L-asparaginyl-[protein] + UDP-N-acetyl-alpha-D-glucosamine = an N(4)-{beta-D-GlcNAc-(1-&gt;2)-[beta-D-GlcNAc-(1-&gt;4)]-alpha-D-Man-(1-&gt;3)-[beta-D-GlcNAc-(1-&gt;2)-[beta-D-GlcNAc-(1-&gt;6)]-alpha-D-Man-(1-&gt;6)]-beta-D-Man-(1-&gt;4)-beta-D-GlcNAc-(1-&gt;4)-beta-D-GlcNAc}-L-asparaginyl-[protein] + UDP + H(+). The enzyme catalyses an N(4)-{beta-D-GlcNAc-(1-&gt;2)-alpha-D-Man-(1-&gt;3)-[beta-D-GlcNAc-(1-&gt;2)-alpha-D-Man-(1-&gt;6)]-beta-D-Man-(1-&gt;4)-beta-D-GlcNAc-(1-&gt;4)-[alpha-L-Fuc-(1-&gt;6)]-beta-D-GlcNAc}-L-asparaginyl-[protein] + UDP-N-acetyl-alpha-D-glucosamine = N(4)-{beta-D-GlcNAc-(1-&gt;2)-[beta-D-GlcNAc-(1-&gt;4)]-alpha-D-Man-(1-&gt;3)-[beta-D-GlcNAc-(1-&gt;2)-alpha-D-Man-(1-&gt;6)]-beta-D-Man-(1-&gt;4)-beta-D-GlcNAc-(1-&gt;4)-[alpha-L-Fuc-(1-&gt;6)]-beta-D-GlcNAc}-asparaginyl-[protein] + UDP + H(+). The catalysed reaction is an N(4)-{beta-D-GlcNAc-(1-&gt;2)-alpha-D-Man-(1-&gt;3)-[beta-D-Gal-(1-&gt;4)-beta-D-GlcNAc-(1-&gt;2)-alpha-D-Man-(1-&gt;6)]-beta-D-Man-(1-&gt;4)-beta-D-GlcNAc-(1-&gt;4)-beta-D-GlcNAc}-L-asparaginyl-[protein] + UDP-N-acetyl-alpha-D-glucosamine = an N(4)-{beta-D-GlcNAc-(1-&gt;2)-[beta-D-GlcNAc-(1-&gt;4)]-alpha-D-Man-(1-&gt;3)-[beta-D-Gal-(1-&gt;4)-beta-D-GlcNAc-(1-&gt;2)-alpha-D-Man-(1-&gt;6)]-beta-D-Man-(1-&gt;4)-beta-D-GlcNAc-(1-&gt;4)-beta-D-GlcNAc}-L-asparaginyl-[protein] + UDP + H(+). It carries out the reaction N(4)-{beta-D-GlcNAc-(1-&gt;2)-alpha-D-Man-(1-&gt;3)-[alpha-D-Man-(1-&gt;3)-{alpha-D-Man-(1-&gt;6)}-alpha-D-Man-(1-&gt;6)]-beta-D-Man-(1-&gt;4)-beta-D-GlcNAc-(1-&gt;4)-beta-D-GlcNAc}-asparaginyl-[protein] + UDP-N-acetyl-alpha-D-glucosamine = N(4)-{beta-D-GlcNAc-(1-&gt;2)-[beta-D-GlcNAc-(1-&gt;4)]-alpha-D-Man-(1-&gt;3)-[alpha-D-Man-(1-&gt;3)-{alpha-D-Man-(1-&gt;6)}-alpha-D-Man-(1-&gt;6)]-beta-D-Man-(1-&gt;4)-beta-D-GlcNAc-(1-&gt;4)-beta-D-GlcNAc}-asparaginyl-[protein] + UDP + H(+). It catalyses the reaction N(4)-{beta-D-GlcNAc-(1-&gt;2)-alpha-D-Man-(1-&gt;3)-beta-D-Man-(1-&gt;4)-beta-D-GlcNAc-(1-&gt;4)-beta-D-GlcNAc}-asparaginyl-[protein] + UDP-N-acetyl-alpha-D-glucosamine = N(4)-{beta-D-GlcNAc-(1-&gt;2)-[beta-D-GlcNAc-(1-&gt;4)]-alpha-D-Man-(1-&gt;3)-beta-D-Man-(1-&gt;4)-beta-D-GlcNAc-(1-&gt;4)-beta-D-GlcNAc}-asparaginyl-[protein] + UDP + H(+). Its pathway is protein modification; protein glycosylation. Its activity is regulated as follows. Inhibited by UDP. In terms of biological role, glycosyltransferase that catalyze the transfer of GlcNAc from UDP-GlcNAc to the GlcNAcbeta1-2Manalpha1-3 arm of the core structure of N-linked glycans through a beta1-4 linkage and participates in the production of tri- and tetra-antennary N-linked sugar chains. Involved in glucose transport by mediating SLC2A2/GLUT2 glycosylation, thereby controlling cell-surface expression of SLC2A2 in pancreatic beta cells. The protein is Alpha-1,3-mannosyl-glycoprotein 4-beta-N-acetylglucosaminyltransferase A of Mus musculus (Mouse).